We begin with the raw amino-acid sequence, 177 residues long: Protein FATTY ACID EXPORT 4, chloroplastic (177 aa).

A chloroplast-targeting transit peptide spans 1–63 (MWSLALTLPS…AELSELAPVV (63 aa)). 3 helical membrane passes run 85–105 (KGSL…YFLT), 111–131 (RVLG…VFGF), and 140–160 (VPAG…VMAY).

Belongs to the TMEM14 family.

The protein localises to the plastid. It is found in the chloroplast membrane. In terms of biological role, may be involved in free fatty acids export from the plastids. The polypeptide is Protein FATTY ACID EXPORT 4, chloroplastic (Arabidopsis thaliana (Mouse-ear cress)).